The following is a 418-amino-acid chain: Vasopressin V1a receptor (418 aa).

The tract at residues 1–43 (MRLSAGPDAGPSGNSSPWWPLATGAGNTSREAEALGEGNGPPR) is disordered. At 1–52 (MRLSAGPDAGPSGNSSPWWPLATGAGNTSREAEALGEGNGPPRDVRNEELAK) the chain is on the extracellular side. Asn27 carries an N-linked (GlcNAc...) asparagine glycan. The helical transmembrane segment at 53–76 (LEIAVLAVTFAVAVLGNSSVLLAL) threads the bilayer. The Cytoplasmic portion of the chain corresponds to 77–88 (HRTPRKTSRMHL). The helical transmembrane segment at 89 to 110 (FIRHLSLADLAVAFFQVLPQMC) threads the bilayer. Over 111 to 125 (WDITYRFRGPDWLCR) the chain is Extracellular. The cysteines at positions 124 and 203 are disulfide-linked. A helical membrane pass occupies residues 126–147 (VVKHLQVFGMFASAYMLVVMTA). Topologically, residues 148–168 (DRYIAVCHPLKTLQQPARRSR) are cytoplasmic. A helical transmembrane segment spans residues 169 to 190 (LMIAAAWVLSFVLSTPQYFVFS). Over 191–218 (MIEVNNVTKARDCWATFIQPWGSRAYVT) the chain is Extracellular. An N-linked (GlcNAc...) asparagine glycan is attached at Asn196. Residues 219–239 (WMTGGIFVAPVVILGTCYGFI) traverse the membrane as a helical segment. Over 240 to 293 (CYNIWCNVRGKTASRQSKGAEQAGVAFQKGFLLAPCVSSVKSISRAKIRTVKMT) the chain is Cytoplasmic. A helical membrane pass occupies residues 294-313 (FVIVTAYIVCWAPFFIIQMW). At 314–331 (SVWDPMSVWTESENPTIT) the chain is on the extracellular side. A helical membrane pass occupies residues 332-351 (ITALLGSLNSCCNPWIYMFF). Residues 352-418 (SGHLLQDCVQ…KSIKFIPVST (67 aa)) are Cytoplasmic-facing. 2 S-palmitoyl cysteine lipidation sites follow: Cys365 and Cys366. Positions 377–410 (DTDSMSRRQTFYSNNRSPTNSTGMWKDSPKSSKS) are disordered. The segment covering 383 to 399 (RRQTFYSNNRSPTNSTG) has biased composition (polar residues). Residue Ser404 is modified to Phosphoserine.

The protein belongs to the G-protein coupled receptor 1 family. Vasopressin/oxytocin receptor subfamily.

Its subcellular location is the cell membrane. Functionally, receptor for arginine vasopressin. The activity of this receptor is mediated by G proteins which activate a phosphatidyl-inositol-calcium second messenger system. Has been involved in social behaviors, including affiliation and attachment. The protein is Vasopressin V1a receptor (AVPR1A) of Homo sapiens (Human).